Consider the following 490-residue polypeptide: Glutamate--tRNA ligase (490 aa).

The 'HIGH' region motif lies at 9–19; the sequence is PSPTGLQHIGG. A 'KMSKS' region motif is present at residues 251–255; sequence KLSKR. Lys-254 serves as a coordination point for ATP.

This sequence belongs to the class-I aminoacyl-tRNA synthetase family. Glutamate--tRNA ligase type 1 subfamily. As to quaternary structure, monomer.

Its subcellular location is the cytoplasm. It carries out the reaction tRNA(Glu) + L-glutamate + ATP = L-glutamyl-tRNA(Glu) + AMP + diphosphate. Catalyzes the attachment of glutamate to tRNA(Glu) in a two-step reaction: glutamate is first activated by ATP to form Glu-AMP and then transferred to the acceptor end of tRNA(Glu). The chain is Glutamate--tRNA ligase from Borreliella afzelii (strain PKo) (Borrelia afzelii).